A 255-amino-acid chain; its full sequence is Small ribosomal subunit protein uS2 (255 aa).

The segment at 231-255 is disordered; it reads RLQTGAEEEFSTEGEEVVEETPAEA. Residues 236-255 show a composition bias toward acidic residues; sequence AEEEFSTEGEEVVEETPAEA.

It belongs to the universal ribosomal protein uS2 family.

The protein is Small ribosomal subunit protein uS2 of Citrifermentans bemidjiense (strain ATCC BAA-1014 / DSM 16622 / JCM 12645 / Bem) (Geobacter bemidjiensis).